Reading from the N-terminus, the 142-residue chain is Maximins y/Hw (142 aa).

The N-terminal stretch at 1–18 (MIFKYIVAVSFLIASGYA) is a signal peptide. Residues 19–43 (RSVKNDEQSLSQREVLEEESLREIR) constitute a propeptide that is removed on maturation. The residue at position 68 (F68) is a Phenylalanine amide. Positions 72 to 121 (TAEDHEVMKRLEAVIRDLDSLDHSEEASERETRGFNQEEIANLFTKKEKR) are excised as a propeptide. I141 carries the isoleucine amide modification.

Belongs to the bombinin family. Expressed by the skin glands.

It localises to the secreted. Its function is as follows. Maximin-y shows antimicrobial activity against bacteria and against the fungus C.albicans. It has little hemolytic activity. Maximin-Hw shows antimicrobial activity against bacteria and against the fungus C.albicans. Shows strong hemolytic activity. This is Maximins y/Hw from Bombina maxima (Giant fire-bellied toad).